The primary structure comprises 180 residues: MADYLKLFQDSLKGLDTKFAGNQILSRIEAQTKLPRSYVIVGLVAVYFLLIFINVGGIGEILSNFVGFCIPTYYSLKALKTATSTDDTQLLTYWIVFSFLSVIEFWSKAILYWVPFYWFFKTVFLLYIAIPSFGGAQLVYTRLISPFSDKYLPIVEGKSGELAQKVEAAANNAKASGYSR.

Over 1–35 the chain is Cytoplasmic; sequence MADYLKLFQDSLKGLDTKFAGNQILSRIEAQTKLP. Residues 36-55 form a helical membrane-spanning segment; it reads RSYVIVGLVAVYFLLIFINV. Over 56 to 57 the chain is Lumenal; it reads GG. The chain crosses the membrane as a helical span at residues 58–78; that stretch reads IGEILSNFVGFCIPTYYSLKA. Residues 79–88 lie on the Cytoplasmic side of the membrane; it reads LKTATSTDDT. Residues 89–105 traverse the membrane as a helical segment; the sequence is QLLTYWIVFSFLSVIEF. The Lumenal segment spans residues 106-108; it reads WSK. The helical transmembrane segment at 109 to 127 threads the bilayer; the sequence is AILYWVPFYWFFKTVFLLY. Residues 128 to 180 are Cytoplasmic-facing; sequence IAIPSFGGAQLVYTRLISPFSDKYLPIVEGKSGELAQKVEAAANNAKASGYSR.

This sequence belongs to the DP1 family. Oligomer.

The protein resides in the endoplasmic reticulum membrane. It localises to the golgi apparatus membrane. Its function is as follows. Required to generate and maintain the structure of the tubular endoplasmic reticulum network and the vacuole. Induces high curvature in membranes and causes membrane tubule formation. Involved in membrane/vesicle trafficking. The polypeptide is Protein YOP1 (YOP1) (Kluyveromyces lactis (strain ATCC 8585 / CBS 2359 / DSM 70799 / NBRC 1267 / NRRL Y-1140 / WM37) (Yeast)).